Here is a 175-residue protein sequence, read N- to C-terminus: ATP synthase subunit delta (175 aa).

Belongs to the ATPase delta chain family. F-type ATPases have 2 components, F(1) - the catalytic core - and F(0) - the membrane proton channel. F(1) has five subunits: alpha(3), beta(3), gamma(1), delta(1), epsilon(1). F(0) has three main subunits: a(1), b(2) and c(10-14). The alpha and beta chains form an alternating ring which encloses part of the gamma chain. F(1) is attached to F(0) by a central stalk formed by the gamma and epsilon chains, while a peripheral stalk is formed by the delta and b chains.

Its subcellular location is the cell inner membrane. F(1)F(0) ATP synthase produces ATP from ADP in the presence of a proton or sodium gradient. F-type ATPases consist of two structural domains, F(1) containing the extramembraneous catalytic core and F(0) containing the membrane proton channel, linked together by a central stalk and a peripheral stalk. During catalysis, ATP synthesis in the catalytic domain of F(1) is coupled via a rotary mechanism of the central stalk subunits to proton translocation. In terms of biological role, this protein is part of the stalk that links CF(0) to CF(1). It either transmits conformational changes from CF(0) to CF(1) or is implicated in proton conduction. This Sulfurovum sp. (strain NBC37-1) protein is ATP synthase subunit delta.